The chain runs to 139 residues: Actin-depolymerizing factor 4 (139 aa).

Residues 5-139 enclose the ADF-H domain; it reads SSGVAIHDDC…SLDALKDRVK (135 aa).

The protein belongs to the actin-binding proteins ADF family. Interacts with LECRK1 (via kinase domain).

It is found in the cytoplasm. The protein resides in the cytoskeleton. In terms of biological role, actin-depolymerizing protein. Severs actin filaments (F-actin) and binds to actin monomers. Involved in innate immunity. Required for the expression of defense-related genes PR1A, LOX2 and CHS1 upon biotic stresses. Required for basal resistance to the fungal blast (Magnaporthe grisea), bacterial blight (Xanthomonas oryzae pv. oryzae, Xoo) and the herbivorous insect brown planthopper (Nilaparvata lugens, BPH). Involved in the promotion of seed germination. Required for the expression of alpha-amylase genes during seed germination. The sequence is that of Actin-depolymerizing factor 4 (ADF4) from Oryza sativa subsp. japonica (Rice).